Here is a 127-residue protein sequence, read N- to C-terminus: Calcitonin receptor-stimulating peptide 2 (127 aa).

The first 25 residues, 1 to 25 (MGFWKLSPFLAIGLLVMYQAGILQA), serve as a signal peptide directing secretion. The propeptide occupies 26–81 (APFRSALENPLESATLTEDEICVLLTAVVKDYVQMKARELQQEQETEGSSLTAQKS). The interval 65-85 (LQQEQETEGSSLTAQKSSCKD) is disordered. The segment covering 72–81 (EGSSLTAQKS) has biased composition (polar residues). A disulfide bridge connects residues Cys83 and Cys88.

This sequence belongs to the calcitonin family.

The protein resides in the secreted. This chain is Calcitonin receptor-stimulating peptide 2 (CRSP2), found in Canis lupus familiaris (Dog).